Here is a 102-residue protein sequence, read N- to C-terminus: MFAIIETGGKQYKVKEHDIIRIEKLNASVGEEVTLSKVIALTGVDNEVIFTQNASVTASVLEQCRNDKVIIFKKKRRKNYRRKNGHRQYMTVLRITKINNME.

The protein belongs to the bacterial ribosomal protein bL21 family. In terms of assembly, part of the 50S ribosomal subunit. Contacts protein L20.

This protein binds to 23S rRNA in the presence of protein L20. This chain is Large ribosomal subunit protein bL21, found in Ehrlichia ruminantium (strain Gardel).